A 188-amino-acid chain; its full sequence is dCTP deaminase (188 aa).

Residues 111–116, 135–137, Gln-156, Tyr-170, Lys-179, and Gln-180 each bind dCTP; these read KSTYAR and TLE. The active-site Proton donor/acceptor is Glu-137.

Belongs to the dCTP deaminase family. In terms of assembly, homotrimer.

It carries out the reaction dCTP + H2O + H(+) = dUTP + NH4(+). It participates in pyrimidine metabolism; dUMP biosynthesis; dUMP from dCTP (dUTP route): step 1/2. Functionally, catalyzes the deamination of dCTP to dUTP. This chain is dCTP deaminase, found in Rickettsia bellii (strain OSU 85-389).